Here is a 1539-residue protein sequence, read N- to C-terminus: Lysine-specific demethylase 5D (1539 aa).

The JmjN domain maps to 14–55; the sequence is CPVFEPSWAEFQDPLGYIAKIRPIAEKSGICKIRPPADWQPP. The ARID domain maps to 79-169; the sequence is TRVKLNYLDQ…IIYPYEMFQS (91 aa). Residues 192–228 are disordered; sequence PHSIPLRQSVQPSKFSSYSRRAKRLQPDPEPTEEDIE. A compositionally biased stretch (polar residues) spans 197–210; the sequence is LRQSVQPSKFSSYS. Residues Lys-205, Lys-229, Lys-244, and Lys-272 each participate in a glycyl lysine isopeptide (Lys-Gly) (interchain with G-Cter in SUMO2) cross-link. 2 positions are modified to phosphoserine: Ser-291 and Ser-307. Residues 316–362 form a PHD-type 1 zinc finger; it reads ICQVCSRGDEDDKLLFCDGCDDNYHIFCLLPPLPEIPRGIWRCPKCI. Tyr-430 is a 2-oxoglutarate binding site. The JmjC domain occupies 458 to 624; it reads EYATSGWNLN…AGRQCIEHYR (167 aa). His-504 and Glu-506 together coordinate Fe cation. 2-oxoglutarate is bound by residues Ser-512, Asn-514, and Lys-522. His-592 is a binding site for Fe cation. Residues 697 to 749 form a C5HC2 zinc finger; the sequence is CIKCKTTCFLSALACYDCPDGLVCLSHINDLCKCSSSRQYLRYRYTLDELPTM. Phosphoserine is present on Ser-884. The PHD-type 2 zinc-finger motif lies at 1174–1235; sequence ICVCGQVPAG…DTKFLCPLCM (62 aa). Residue Ser-1346 is modified to Phosphoserine. Residues 1429–1521 are disordered; it reads HQGSRTRSRA…QHKDSGSSAA (93 aa). The span at 1432-1446 shows a compositional bias: basic residues; that stretch reads SRTRSRALERRRRRQ. Residues 1477 to 1491 are compositionally biased toward basic and acidic residues; that stretch reads GREEEHYQEKADREN. Positions 1494 to 1521 are enriched in polar residues; that stretch reads LTPSTDHSPFLKGNQNSLQHKDSGSSAA.

It belongs to the JARID1 histone demethylase family. Interacts with PCGF6, MSH5, ZMYND8, AR. It depends on L-ascorbate as a cofactor. The cofactor is Fe(2+). In terms of tissue distribution, expression is highly down-regulated in metastatic prostate tumors.

It localises to the nucleus. The enzyme catalyses N(6),N(6),N(6)-trimethyl-L-lysyl(4)-[histone H3] + 3 2-oxoglutarate + 3 O2 = L-lysyl(4)-[histone H3] + 3 formaldehyde + 3 succinate + 3 CO2. Functionally, histone demethylase that specifically demethylates 'Lys-4' of histone H3, thereby playing a central role in histone code. Does not demethylate histone H3 'Lys-9', H3 'Lys-27', H3 'Lys-36', H3 'Lys-79' or H4 'Lys-20'. Demethylates trimethylated and dimethylated but not monomethylated H3 'Lys-4'. May play a role in spermatogenesis. Involved in transcriptional repression of diverse metastasis-associated genes; in this function seems to cooperate with ZMYND8. Suppresses prostate cancer cell invasion. Regulates androgen receptor (AR) transcriptional activity by demethylating H3K4me3 active transcription marks. The chain is Lysine-specific demethylase 5D (KDM5D) from Homo sapiens (Human).